A 257-amino-acid chain; its full sequence is MSDPHLKEKVVVIAGPTASGKSDLAIKIAQMIDSEIISEDAFQIYRGLDIGTAKPSKDDLAKVKHHFIDIKEVDESYSAYEFARDARIVINQISSKKKIPLIVGGSGFFLQTLLGDRRISDKDNPIVPKKAGIENRLYNALLIGLNTERSQLYDRINQRVERMFEKGIVKEAENLFRQQGNFQSKKAIGYREFAGYFANQYDLSEVETLIKRDSRRYAKRQLTYFKNQFPDMRWFDTKQITENPKLIIDLVKKFNQF.

15–22 (GPTASGKS) contributes to the ATP binding site. Substrate is bound at residue 17–22 (TASGKS).

It belongs to the IPP transferase family. As to quaternary structure, monomer. The cofactor is Mg(2+).

The enzyme catalyses adenosine(37) in tRNA + dimethylallyl diphosphate = N(6)-dimethylallyladenosine(37) in tRNA + diphosphate. Catalyzes the transfer of a dimethylallyl group onto the adenine at position 37 in tRNAs that read codons beginning with uridine, leading to the formation of N6-(dimethylallyl)adenosine (i(6)A). The protein is tRNA dimethylallyltransferase of Oenococcus oeni (strain ATCC BAA-331 / PSU-1).